A 216-amino-acid chain; its full sequence is Ribonuclease HII (216 aa).

Residues 33–216 (WPVAGADEAG…RMSFRPFRQL (184 aa)) form the RNase H type-2 domain. Residues D39, E40, and D130 each coordinate a divalent metal cation.

This sequence belongs to the RNase HII family. Mn(2+) serves as cofactor. Mg(2+) is required as a cofactor.

The protein resides in the cytoplasm. It carries out the reaction Endonucleolytic cleavage to 5'-phosphomonoester.. Its function is as follows. Endonuclease that specifically degrades the RNA of RNA-DNA hybrids. The protein is Ribonuclease HII of Sinorhizobium medicae (strain WSM419) (Ensifer medicae).